We begin with the raw amino-acid sequence, 122 residues long: Large ribosomal subunit protein bL17 (122 aa).

It belongs to the bacterial ribosomal protein bL17 family. In terms of assembly, part of the 50S ribosomal subunit. Contacts protein L32.

The chain is Large ribosomal subunit protein bL17 from Staphylococcus epidermidis (strain ATCC 35984 / DSM 28319 / BCRC 17069 / CCUG 31568 / BM 3577 / RP62A).